A 267-amino-acid chain; its full sequence is 5'-nucleotidase SurE (267 aa).

Residues D14, D15, S45, and N100 each contribute to the a divalent metal cation site.

It belongs to the SurE nucleotidase family. A divalent metal cation is required as a cofactor.

It localises to the cytoplasm. It catalyses the reaction a ribonucleoside 5'-phosphate + H2O = a ribonucleoside + phosphate. Nucleotidase that shows phosphatase activity on nucleoside 5'-monophosphates. The sequence is that of 5'-nucleotidase SurE from Methanosarcina mazei (strain ATCC BAA-159 / DSM 3647 / Goe1 / Go1 / JCM 11833 / OCM 88) (Methanosarcina frisia).